Consider the following 61-residue polypeptide: Metallothionein-I, hippocampal (61 aa).

Residue M1 is modified to N-acetylmethionine. The tract at residues 1 to 29 (MDPNCSCATGDSCACASTCKCKECKCTSC) is beta. 18 residues coordinate a divalent metal cation: C5, C7, C13, C15, C19, C21, C24, C26, C29, C33, C34, C36, C37, C41, C44, C48, C50, and C57. Residues 30-61 (KKSCCSCCPVGCAKCAQGCICKGASDKCSCCA) form an alpha region. Residue S58 is modified to Phosphoserine. Residues C59 and C60 each contribute to the a divalent metal cation site.

This sequence belongs to the metallothionein superfamily. Type 1 family.

Its function is as follows. Metallothioneins have a high content of cysteine residues that bind various heavy metals; these proteins are transcriptionally regulated by both heavy metals and glucocorticoids. This isoform may play a role in regulating the transport, accumulation, and compartmentation of zinc in the hippocampus. This is Metallothionein-I, hippocampal from Bos taurus (Bovine).